The primary structure comprises 166 residues: Large ribosomal subunit protein mL49 (166 aa).

Residues 54–77 (PTKIPEPPKHKHYPTPSGWQPPRD) are disordered.

It belongs to the mitochondrion-specific ribosomal protein mL49 family. Component of the mitochondrial ribosome large subunit (39S) which comprises a 16S rRNA and about 50 distinct proteins. Interacts with OXA1L.

The protein localises to the mitochondrion. This chain is Large ribosomal subunit protein mL49 (Mrpl49), found in Mus musculus (Mouse).